Consider the following 331-residue polypeptide: Ketol-acid reductoisomerase (NADP(+)) (331 aa).

Positions 2–181 (TKVYYEDAVK…GATRAGVIET (180 aa)) constitute a KARI N-terminal Rossmann domain. NADP(+)-binding positions include 25–28 (YGSQ), R48, S52, and 82–85 (DETQ). Residue H107 is part of the active site. Position 133 (G133) interacts with NADP(+). The 146-residue stretch at 182-327 (TFKEETETDL…AELREMMPFV (146 aa)) folds into the KARI C-terminal knotted domain. The Mg(2+) site is built by D190, E194, E226, and E230. S251 serves as a coordination point for substrate.

Belongs to the ketol-acid reductoisomerase family. The cofactor is Mg(2+).

It catalyses the reaction (2R)-2,3-dihydroxy-3-methylbutanoate + NADP(+) = (2S)-2-acetolactate + NADPH + H(+). The catalysed reaction is (2R,3R)-2,3-dihydroxy-3-methylpentanoate + NADP(+) = (S)-2-ethyl-2-hydroxy-3-oxobutanoate + NADPH + H(+). It participates in amino-acid biosynthesis; L-isoleucine biosynthesis; L-isoleucine from 2-oxobutanoate: step 2/4. The protein operates within amino-acid biosynthesis; L-valine biosynthesis; L-valine from pyruvate: step 2/4. Its function is as follows. Involved in the biosynthesis of branched-chain amino acids (BCAA). Catalyzes an alkyl-migration followed by a ketol-acid reduction of (S)-2-acetolactate (S2AL) to yield (R)-2,3-dihydroxy-isovalerate. In the isomerase reaction, S2AL is rearranged via a Mg-dependent methyl migration to produce 3-hydroxy-3-methyl-2-ketobutyrate (HMKB). In the reductase reaction, this 2-ketoacid undergoes a metal-dependent reduction by NADPH to yield (R)-2,3-dihydroxy-isovalerate. This chain is Ketol-acid reductoisomerase (NADP(+)), found in Listeria innocua serovar 6a (strain ATCC BAA-680 / CLIP 11262).